We begin with the raw amino-acid sequence, 678 residues long: Ribonuclease Z 2, mitochondrial (678 aa).

The N-terminal 37 residues, 1–37 (MKASLLVPRRALLFGQLLPPKYSWYSVKRWQSQLTFR), are a transit peptide targeting the mitochondrion.

It belongs to the RNase Z family. Zn(2+) serves as cofactor.

Its subcellular location is the mitochondrion. The protein resides in the cytoplasm. It carries out the reaction Endonucleolytic cleavage of RNA, removing extra 3' nucleotides from tRNA precursor, generating 3' termini of tRNAs. A 3'-hydroxy group is left at the tRNA terminus and a 5'-phosphoryl group is left at the trailer molecule.. Its function is as follows. Zinc phosphodiesterase, which displays some tRNA 3'-processing endonuclease activity. May be involved in tRNA maturation, by removing a 3'-trailer from precursor tRNA. This is Ribonuclease Z 2, mitochondrial (trz2) from Schizosaccharomyces pombe (strain 972 / ATCC 24843) (Fission yeast).